A 134-amino-acid polypeptide reads, in one-letter code: Protein NrdI (134 aa).

It belongs to the NrdI family.

Probably involved in ribonucleotide reductase function. The chain is Protein NrdI from Rhizobium etli (strain CIAT 652).